The following is an 83-amino-acid chain: Defensin-1 (83 aa).

Residues 1-33 (MAGKGVGSRLSTLFLLVLLVITIGMMQVQVAEG) form the signal peptide. 4 cysteine pairs are disulfide-bonded: C36–C82, C47–C67, C53–C76, and C57–C78.

This sequence belongs to the DEFL family.

It localises to the secreted. In terms of biological role, plant defense peptide. Has antifungal activity against B.cinera, F.oxysporum, F.solani and H.annosum with IC(50) values of 0.4 ug/ml, 2.9 ug/ml, 0.9 ug/ml and 1.4 ug/ml, respectively. Has modest antifungal activity against C.albicans and T.reesei. Causes thickening of F.oxysporum hyphae and an increase in their branching. Lacks antibacterial activity against the Gram-negative bacteria E.coli and E.carotovora. This is Defensin-1 from Pinus sylvestris (Scotch pine).